Consider the following 311-residue polypeptide: Protein translocase subunit SecF (311 aa).

6 consecutive transmembrane segments (helical) span residues 19–39 (AIYA…TQGL), 142–162 (MLAM…RFEL), 166–186 (LGAV…FSVL), 192–212 (LVVV…TIVV), 245–265 (ITSL…GAVI), and 272–292 (LLFG…PLVL).

It belongs to the SecD/SecF family. SecF subfamily. As to quaternary structure, forms a complex with SecD. Part of the essential Sec protein translocation apparatus which comprises SecA, SecYEG and auxiliary proteins SecDF-YajC and YidC.

It is found in the cell inner membrane. Part of the Sec protein translocase complex. Interacts with the SecYEG preprotein conducting channel. SecDF uses the proton motive force (PMF) to complete protein translocation after the ATP-dependent function of SecA. The sequence is that of Protein translocase subunit SecF from Magnetococcus marinus (strain ATCC BAA-1437 / JCM 17883 / MC-1).